We begin with the raw amino-acid sequence, 246 residues long: MISILVTGISGRMGQAIQEAVTQNPDTCVGSTHDQGQELYPALAKCDVAIDFSHHAFTSTLLAEAVANNKPLVIGTTGHTELERQEIVDAAASIPIVFASNYSVGVNALFWLTRKAAQILGGSCDIEVMEMHHRHKIDAPSGTARTLAEILSGAIDRNYEDSVVFGREGLVGPRPAKEIGMHSLRGGDVVGDHTVIFASDGERLELTHKASSRMTFASGAVRAALWLQGREPGLYTMEDVLGLSQL.

NAD(+) contacts are provided by residues 8-13 (GISGRM), 75-77 (GTT), and 99-102 (ASNY). Catalysis depends on His-132, which acts as the Proton donor/acceptor. A (S)-2,3,4,5-tetrahydrodipicolinate-binding site is contributed by His-133. The active-site Proton donor is the Lys-136. (S)-2,3,4,5-tetrahydrodipicolinate is bound at residue 142-143 (GT).

This sequence belongs to the DapB family.

It localises to the cytoplasm. The enzyme catalyses (S)-2,3,4,5-tetrahydrodipicolinate + NAD(+) + H2O = (2S,4S)-4-hydroxy-2,3,4,5-tetrahydrodipicolinate + NADH + H(+). The catalysed reaction is (S)-2,3,4,5-tetrahydrodipicolinate + NADP(+) + H2O = (2S,4S)-4-hydroxy-2,3,4,5-tetrahydrodipicolinate + NADPH + H(+). It participates in amino-acid biosynthesis; L-lysine biosynthesis via DAP pathway; (S)-tetrahydrodipicolinate from L-aspartate: step 4/4. Functionally, catalyzes the conversion of 4-hydroxy-tetrahydrodipicolinate (HTPA) to tetrahydrodipicolinate. The protein is 4-hydroxy-tetrahydrodipicolinate reductase of Akkermansia muciniphila (strain ATCC BAA-835 / DSM 22959 / JCM 33894 / BCRC 81048 / CCUG 64013 / CIP 107961 / Muc).